A 532-amino-acid polypeptide reads, in one-letter code: Putative F-box/LRR-repeat protein At3g42770 (532 aa).

Residues 1 to 46 (MNCLPDELLVQILSFLPTKEATSTSLLSKRWRTLFTLSPNLDFDNS) form the F-box domain. LRR repeat units lie at residues 113-135 (VSEL…IFTS), 279-305 (IRNV…EIPM), and 398-420 (MNDL…SPKL).

The polypeptide is Putative F-box/LRR-repeat protein At3g42770 (Arabidopsis thaliana (Mouse-ear cress)).